A 229-amino-acid polypeptide reads, in one-letter code: Large ribosomal subunit protein uL1 (229 aa).

It belongs to the universal ribosomal protein uL1 family. As to quaternary structure, part of the 50S ribosomal subunit.

Functionally, binds directly to 23S rRNA. The L1 stalk is quite mobile in the ribosome, and is involved in E site tRNA release. Protein L1 is also a translational repressor protein, it controls the translation of the L11 operon by binding to its mRNA. This Chlorobium luteolum (strain DSM 273 / BCRC 81028 / 2530) (Pelodictyon luteolum) protein is Large ribosomal subunit protein uL1.